Here is a 411-residue protein sequence, read N- to C-terminus: Glucose-1-phosphate adenylyltransferase (411 aa).

Alpha-D-glucose 1-phosphate is bound by residues Gly-161, Glu-176 to Lys-177, and Ser-195.

Belongs to the bacterial/plant glucose-1-phosphate adenylyltransferase family. As to quaternary structure, homotetramer.

The catalysed reaction is alpha-D-glucose 1-phosphate + ATP + H(+) = ADP-alpha-D-glucose + diphosphate. The protein operates within glycan biosynthesis; glycogen biosynthesis. Its function is as follows. Involved in the biosynthesis of ADP-glucose, a building block required for the elongation reactions to produce glycogen. Catalyzes the reaction between ATP and alpha-D-glucose 1-phosphate (G1P) to produce pyrophosphate and ADP-Glc. The sequence is that of Glucose-1-phosphate adenylyltransferase from Anaeromyxobacter sp. (strain Fw109-5).